Reading from the N-terminus, the 87-residue chain is Kappa-2-bungarotoxin (87 aa).

Positions 1–21 (MKTLLLTLVVVTIVCLDLGYT) are cleaved as a signal peptide. Disulfide bonds link Cys-24-Cys-42, Cys-35-Cys-63, Cys-48-Cys-52, Cys-67-Cys-79, and Cys-80-Cys-85.

This sequence belongs to the three-finger toxin family. Long-chain subfamily. Kappa-neurotoxin sub-subfamily. Homodimer and heterodimer with kappa 3-bungarotoxin; non-covalently linked. Expressed by the venom gland.

It is found in the secreted. Its function is as follows. Postsynaptic neurotoxin that binds and inhibits neuronal nicotinic acetylcholine receptors (nAChR) with high affinity (IC(50)&lt;100 nM). Is a selective, and slowly reversible antagonist of alpha-3/CHRNA3-containing and some alpha-4/CHRNA4-containing AChRs. The protein is Kappa-2-bungarotoxin of Bungarus multicinctus (Many-banded krait).